Here is an 878-residue protein sequence, read N- to C-terminus: Phosphoenolpyruvate carboxylase (878 aa).

Catalysis depends on residues histidine 138 and lysine 545.

This sequence belongs to the PEPCase type 1 family. Mg(2+) is required as a cofactor.

It catalyses the reaction oxaloacetate + phosphate = phosphoenolpyruvate + hydrogencarbonate. Its function is as follows. Forms oxaloacetate, a four-carbon dicarboxylic acid source for the tricarboxylic acid cycle. This is Phosphoenolpyruvate carboxylase from Shewanella halifaxensis (strain HAW-EB4).